The sequence spans 112 residues: Protein ORF1 (112 aa).

Over residues 1-10 (MEGTDWSGWG) the composition is skewed to low complexity. A disordered region spans residues 1-20 (MEGTDWSGWGDDSDFPWPKG). The helical transmembrane segment at 51–71 (IAFVILIVSLFVLLLGVLLAC) threads the bilayer.

It is found in the host membrane. The sequence is that of Protein ORF1 from Snake adenovirus serotype 1 (SnAdV-1).